We begin with the raw amino-acid sequence, 158 residues long: Transcription elongation factor GreA (158 aa).

The stretch at 45-72 forms a coiled coil; the sequence is AEYHAAREQQSFIEGRIKQLEGELSHAE.

It belongs to the GreA/GreB family.

Its function is as follows. Necessary for efficient RNA polymerase transcription elongation past template-encoded arresting sites. The arresting sites in DNA have the property of trapping a certain fraction of elongating RNA polymerases that pass through, resulting in locked ternary complexes. Cleavage of the nascent transcript by cleavage factors such as GreA or GreB allows the resumption of elongation from the new 3'terminus. GreA releases sequences of 2 to 3 nucleotides. The chain is Transcription elongation factor GreA from Xylella fastidiosa (strain M12).